Reading from the N-terminus, the 157-residue chain is MFANLIAEKLQKLQLSVATAESVTGGLLAHCLTSIDGASNYFNGGVIAYNNQVKINLLNVQSSTIANHGAVSSFCAREMAVGVKQKFQADVGIACSGIAGSKAVENKAIGLLFFCIIIGNKAYDFEFEMNQNNRKDNIELFTNKILESFHYLLTKLA.

The protein belongs to the CinA family.

The sequence is that of Protein MG115 from Mycoplasma genitalium (strain ATCC 33530 / DSM 19775 / NCTC 10195 / G37) (Mycoplasmoides genitalium).